Here is a 310-residue protein sequence, read N- to C-terminus: Tyrosine recombinase XerC (310 aa).

The 82-residue stretch at 22-103 folds into the Core-binding (CB) domain; the sequence is SQMLEAIEDF…SVKSFSTWAV (82 aa). Positions 124-304 constitute a Tyr recombinase domain; that stretch reads NLPRVLGEVQ…SSQRLLEAFR (181 aa). Residues arginine 165, lysine 189, histidine 256, arginine 259, and histidine 282 contribute to the active site. Residue tyrosine 291 is the O-(3'-phospho-DNA)-tyrosine intermediate of the active site.

Belongs to the 'phage' integrase family. XerC subfamily. As to quaternary structure, forms a cyclic heterotetrameric complex composed of two molecules of XerC and two molecules of XerD.

It is found in the cytoplasm. Site-specific tyrosine recombinase, which acts by catalyzing the cutting and rejoining of the recombining DNA molecules. The XerC-XerD complex is essential to convert dimers of the bacterial chromosome into monomers to permit their segregation at cell division. It also contributes to the segregational stability of plasmids. The protein is Tyrosine recombinase XerC of Corynebacterium efficiens (strain DSM 44549 / YS-314 / AJ 12310 / JCM 11189 / NBRC 100395).